Reading from the N-terminus, the 55-residue chain is Large ribosomal subunit protein bL33 (55 aa).

It belongs to the bacterial ribosomal protein bL33 family.

This Renibacterium salmoninarum (strain ATCC 33209 / DSM 20767 / JCM 11484 / NBRC 15589 / NCIMB 2235) protein is Large ribosomal subunit protein bL33.